We begin with the raw amino-acid sequence, 239 residues long: 1-(5-phosphoribosyl)-5-[(5-phosphoribosylamino)methylideneamino] imidazole-4-carboxamide isomerase (239 aa).

Residue D8 is the Proton acceptor of the active site. Catalysis depends on D129, which acts as the Proton donor.

The protein belongs to the HisA/HisF family.

It is found in the cytoplasm. The catalysed reaction is 1-(5-phospho-beta-D-ribosyl)-5-[(5-phospho-beta-D-ribosylamino)methylideneamino]imidazole-4-carboxamide = 5-[(5-phospho-1-deoxy-D-ribulos-1-ylimino)methylamino]-1-(5-phospho-beta-D-ribosyl)imidazole-4-carboxamide. Its pathway is amino-acid biosynthesis; L-histidine biosynthesis; L-histidine from 5-phospho-alpha-D-ribose 1-diphosphate: step 4/9. In Bacillus anthracis (strain A0248), this protein is 1-(5-phosphoribosyl)-5-[(5-phosphoribosylamino)methylideneamino] imidazole-4-carboxamide isomerase.